Here is a 258-residue protein sequence, read N- to C-terminus: Snake venom serine protease 2 (258 aa).

Positions M1 to A18 are cleaved as a signal peptide. Residues Q19–L24 constitute a propeptide that is removed on maturation. The Peptidase S1 domain occupies V25–A249. Intrachain disulfides connect C31-C163, C50-C66, C98-C256, C142-C210, C174-C189, and C200-C225. N-linked (GlcNAc...) asparagine glycosylation is present at N44. Catalysis depends on charge relay system residues H65 and D110. 2 N-linked (GlcNAc...) asparagine glycosylation sites follow: N122 and N185. Residue S204 is the Charge relay system of the active site.

This sequence belongs to the peptidase S1 family. Snake venom subfamily. In terms of assembly, monomer. Expressed by the venom gland.

Its subcellular location is the secreted. With respect to regulation, inhibited by PMSF at 2 mM concentration but not by EDTA. Its function is as follows. Snake venom serine protease that may act in the hemostasis system of the prey. Has weak fibrinogen clotting activity. Possesses amidolysis activity towards S-2251 (substrate for plasmin) but has no hydrolytic activity with S-2302 (plasma kallikrein substrate) or S-2238 (thrombin substrate). In Protobothrops jerdonii (Jerdon's pitviper), this protein is Snake venom serine protease 2.